We begin with the raw amino-acid sequence, 320 residues long: Cytochrome f (320 aa).

The N-terminal stretch at 1–35 is a signal peptide; that stretch reads MQTRNAFSWLKKQITRSISVSLMIYILTRTSISSA. 4 residues coordinate heme: Tyr36, Cys56, Cys59, and His60. A helical membrane pass occupies residues 286–306; sequence AQGLLFFLASVILAQIFLVLK.

Belongs to the cytochrome f family. As to quaternary structure, the 4 large subunits of the cytochrome b6-f complex are cytochrome b6, subunit IV (17 kDa polypeptide, petD), cytochrome f and the Rieske protein, while the 4 small subunits are PetG, PetL, PetM and PetN. The complex functions as a dimer. It depends on heme as a cofactor.

Its subcellular location is the plastid. The protein localises to the chloroplast thylakoid membrane. In terms of biological role, component of the cytochrome b6-f complex, which mediates electron transfer between photosystem II (PSII) and photosystem I (PSI), cyclic electron flow around PSI, and state transitions. The sequence is that of Cytochrome f from Nicotiana tomentosiformis (Tobacco).